Consider the following 270-residue polypeptide: Myelin protein zero-like protein 1 (270 aa).

Positions 1 to 35 are cleaved as a signal peptide; sequence MAEAVGAVTLIAAPARRRWLWSALAAMLGLLTARI. Residues 36-151 enclose the Ig-like V-type domain; sequence SALEVHTPKE…DIVVRPGQIR (116 aa). The Extracellular segment spans residues 36–162; sequence SALEVHTPKE…HVVEIDNLLV (127 aa). 2 N-linked (GlcNAc...) asparagine glycosylation sites follow: N50 and N130. An intrachain disulfide couples C58 to C135. A helical transmembrane segment spans residues 163-183; that stretch reads FLVWVVVGTVTAVVLGLTLLI. Over 184-270 the chain is Cytoplasmic; it reads SLVLVVLYRR…SVVYADIRKD (87 aa). The interval 201-257 is disordered; sequence TGCSTSERLSPVKQAPRKCPSDTEGLVKSPPSAGSHQGPVIYAQLDHSGGHHSGKIN. 4 positions are modified to phosphoserine: S204, S206, S210, and S221. The ITIM motif 1 motif lies at 240 to 245; the sequence is VIYAQL. Y242 is modified (phosphotyrosine). The residue at position 261 (S261) is a Phosphoserine. The ITIM motif 2 motif lies at 262-267; sequence VVYADI. Y264 is subject to Phosphotyrosine.

The protein belongs to the myelin P0 protein family. In terms of assembly, interacts with phosphorylated PTPN11/SHP-2. In terms of processing, phosphorylated on tyrosine residues upon stimulation with pervanadate and concanavalin-A (ConA). Phosphorylation at Tyr-242 and Tyr-264 is required for interaction with PTPN11/SHP-2. Dephosphorylated by PTPN11/SHP-2 (in vitro). Post-translationally, N-glycosylated.

The protein localises to the membrane. Cell surface receptor, which is involved in signal transduction processes. Recruits PTPN11/SHP-2 to the cell membrane and is a putative substrate of PTPN11/SHP-2. Is a major receptor for concanavalin-A (ConA) and is involved in cellular signaling induced by ConA, which probably includes Src family tyrosine-protein kinases. May be involved in regulation of integrin-mediated cell motility. The chain is Myelin protein zero-like protein 1 (Mpzl1) from Rattus norvegicus (Rat).